The sequence spans 534 residues: Sodium-dependent lysophosphatidylcholine symporter 1 (534 aa).

The Cytoplasmic portion of the chain corresponds to 1-39; it reads MAKGEGAESGSAAGLLPTSILQASERPVQVKKEPKKKQQ. A helical transmembrane segment spans residues 40 to 69; that stretch reads LSICNKLCYAVGGAPYQLTGCALGFFLQIY. Residues 70-80 lie on the Extracellular side of the membrane; it reads LLDVAKVEPLP. A helical transmembrane segment spans residues 81–101; it reads ASIILFVGRAWDAFTDPLVGF. Residues 102–113 lie on the Cytoplasmic side of the membrane; that stretch reads CISKSSWTRLGR. Residues 114–133 form a helical membrane-spanning segment; the sequence is LMPWIIFSTPLAIIAYFLIW. The Extracellular segment spans residues 134 to 148; sequence FVPDFPSGTESSHGF. The chain crosses the membrane as a helical span at residues 149–173; that stretch reads LWYLLFYCLFETLVTCFHVPYSALT. Residues 174-180 are Cytoplasmic-facing; the sequence is MFISTEQ. The helical transmembrane segment at 181-212 threads the bilayer; that stretch reads SERDSATAYRMTVEVLGTVIGTAIQGQIVGQA. Residues 213–232 are Extracellular-facing; the sequence is KAPCLQDQNGSVVVSEVANR. C216 and C464 are disulfide-bonded. N-linked (GlcNAc...) asparagine glycosylation is found at N221 and N231. Residues 233–266 traverse the membrane as a helical segment; sequence TQSTASLKDTQNAYLLAAGIIASIYVLCAFILIL. Over 267–297 the chain is Cytoplasmic; that stretch reads GVREQRELYESQQAESMPFFQGLRLVMGHGP. The chain crosses the membrane as a helical span at residues 298–324; the sequence is YVKLIAGFLFTSLAFMLVEGNFALFCT. The Extracellular portion of the chain corresponds to 325–335; the sequence is YTLDFRNEFQN. Residues 336–354 form a helical membrane-spanning segment; sequence LLLAIMLSATFTIPIWQWF. At 355 to 358 the chain is on the cytoplasmic side; that stretch reads LTRF. A helical membrane pass occupies residues 359–380; sequence GKKTAVYIGISSAVPFLILVAL. Residues 381 to 383 are Extracellular-facing; that stretch reads MER. Residues 384-420 traverse the membrane as a helical segment; it reads NLIVTYVVAVAAGVSVAAAFLLPWSMLPDVIDDFHLK. Residues 421 to 430 are Cytoplasmic-facing; it reads HPHSPGTEPI. Residues 431–457 traverse the membrane as a helical segment; it reads FFSFYVFFTKFASGVSLGVSTLSLDFA. The Extracellular segment spans residues 458-469; that stretch reads NYQRQGCSQPEQ. A helical transmembrane segment spans residues 470-493; that stretch reads VKFTLKMLVTMAPIILILLGLLLF. Topologically, residues 494 to 534 are cytoplasmic; sequence KLYPIDEEKRRQNKKALQALREEASSSGCSDTDSTELASIL.

The protein belongs to the major facilitator superfamily. N-glycosylated. As to expression, widely expressed. Exhibits an oscillatory pattern of expression in brown adipose tissue and liver consistent with a circadian rhythm. Enriched in brain micro-vessels, where it is specifically present in endothelium constituting the blood-brain barrier (at protein level).

The protein resides in the cell membrane. It localises to the endoplasmic reticulum membrane. The enzyme catalyses a 1-acyl-sn-glycero-3-phosphocholine(in) + Na(+)(in) = a 1-acyl-sn-glycero-3-phosphocholine(out) + Na(+)(out). It carries out the reaction 1-(4Z,7Z,10Z,13Z,16Z,19Z-docosahexaenoyl)-sn-glycero-3-phosphocholine(in) + Na(+)(in) = 1-(4Z,7Z,10Z,13Z,16Z,19Z-docosahexaenoyl)-sn-glycero-3-phosphocholine(out) + Na(+)(out). The catalysed reaction is 1-(9Z-octadecenoyl)-sn-glycero-3-phosphocholine(in) + Na(+)(in) = 1-(9Z-octadecenoyl)-sn-glycero-3-phosphocholine(out) + Na(+)(out). It catalyses the reaction 1-hexadecanoyl-sn-glycero-3-phosphocholine(in) + Na(+)(in) = 1-hexadecanoyl-sn-glycero-3-phosphocholine(out) + Na(+)(out). The enzyme catalyses a 1-acyl-sn-glycero-3-phosphoethanolamine(in) + Na(+)(in) = a 1-acyl-sn-glycero-3-phosphoethanolamine(out) + Na(+)(out). Sodium-dependent lysophosphatidylcholine (LPC) symporter, which plays an essential role for blood-brain barrier formation and function. Specifically expressed in endothelium of the blood-brain barrier of micro-vessels and transports LPC into the brain. Transport of LPC is essential because it constitutes the major mechanism by which docosahexaenoic acid (DHA), an omega-3 fatty acid that is essential for normal brain growth and cognitive function, enters the brain. Transports LPC carrying long-chain fatty acids such LPC oleate and LPC palmitate with a minimum acyl chain length of 14 carbons. Does not transport docosahexaenoic acid in unesterified fatty acid. Not required for central nervous system vascular morphogenesis. This is Sodium-dependent lysophosphatidylcholine symporter 1 from Mus musculus (Mouse).